A 325-amino-acid chain; its full sequence is tRNA dimethylallyltransferase (325 aa).

17-24 lines the ATP pocket; it reads GPTASGKT. Residue 19 to 24 participates in substrate binding; the sequence is TASGKT. 4 interaction with substrate tRNA regions span residues 42–45, 166–170, 251–256, and 284–291; these read DSAL, QRIQR, RCVGYR, and KRQITWLR.

Belongs to the IPP transferase family. In terms of assembly, monomer. The cofactor is Mg(2+).

It catalyses the reaction adenosine(37) in tRNA + dimethylallyl diphosphate = N(6)-dimethylallyladenosine(37) in tRNA + diphosphate. Its function is as follows. Catalyzes the transfer of a dimethylallyl group onto the adenine at position 37 in tRNAs that read codons beginning with uridine, leading to the formation of N6-(dimethylallyl)adenosine (i(6)A). The sequence is that of tRNA dimethylallyltransferase from Burkholderia multivorans (strain ATCC 17616 / 249).